Here is a 686-residue protein sequence, read N- to C-terminus: NADH-ubiquinone oxidoreductase chain 5 (686 aa).

17 helical membrane-spanning segments follow: residues 3–23 (LIILFLPFVGAFISGFLGRFV), 40–60 (ALLSLYYWLSINELIIGLFSF), 101–121 (ITLPFLFTVLFISFLIHLFSV), 139–159 (LFTFFMAILVTGANYFVLFVG), 160–180 (WEGIGVVSYLLINFWFTRIQA), 198–218 (LSIAYFVMLPAFGSADFSTVF), 222–242 (AYINQTTITIIGFLLLVGAMA), 261–281 (TPVSALIHAATLVTAGSYLLI), 293–313 (VLLVITIIGASTAFFAATCGL), 321–341 (IIAFSTISQLGYMVMAIGLSQ), 350–370 (LFHAYFKALLFLGAGSVIHAF), 382–402 (LINFLPFTYAVMLVGTLSLLA), 432–452 (ILGSVTAGLTAFYSFRLISLV), 472–492 (ITVIIPLAVLAIFSIFFGYVT), 526–546 (LIFKLLPTIFSLAGTLFALYL), 635–655 (ALYITLGLLSLLFIVFAPMLV), and 665–685 (LIILFIFTLIVNSAYLNKKLS).

Belongs to the complex I subunit 5 family.

Its subcellular location is the mitochondrion inner membrane. The catalysed reaction is a ubiquinone + NADH + 5 H(+)(in) = a ubiquinol + NAD(+) + 4 H(+)(out). Functionally, core subunit of the mitochondrial membrane respiratory chain NADH dehydrogenase (Complex I) that is believed to belong to the minimal assembly required for catalysis. Complex I functions in the transfer of electrons from NADH to the respiratory chain. The immediate electron acceptor for the enzyme is believed to be ubiquinone. The polypeptide is NADH-ubiquinone oxidoreductase chain 5 (ND5) (Schizophyllum commune (Split gill fungus)).